We begin with the raw amino-acid sequence, 208 residues long: Translation initiation factor 6 (208 aa).

The protein belongs to the eIF-6 family.

In terms of biological role, binds to the 50S ribosomal subunit and prevents its association with the 30S ribosomal subunit to form the 70S initiation complex. The polypeptide is Translation initiation factor 6 (eif6) (Nanoarchaeum equitans (strain Kin4-M)).